Here is a 439-residue protein sequence, read N- to C-terminus: GlutamylGlutaminyl-tRNA synthetase (439 aa).

The 'HIGH' region signature appears at 6 to 16 (PSPTGDMHIGN). The short motif at 232–236 (KMSKR) is the 'KMSKS' region element. K235 is a binding site for ATP.

This sequence belongs to the class-I aminoacyl-tRNA synthetase family. Glutamate--tRNA ligase type 1 subfamily. Monomer.

It is found in the cytoplasm. It catalyses the reaction tRNA(Glu) + L-glutamate + ATP = L-glutamyl-tRNA(Gln) + AMP + diphosphate. In terms of biological role, aminoacylates tRNA(Gln) with glutamate. Does not aminoacylate tRNA(Glu). The chain is GlutamylGlutaminyl-tRNA synthetase (gltX2) from Helicobacter pylori (strain ATCC 700392 / 26695) (Campylobacter pylori).